Consider the following 494-residue polypeptide: Succinoglycan biosynthesis transport protein ExoT (494 aa).

13 consecutive transmembrane segments (helical) span residues 16 to 36 (WSVL…PILA), 44 to 64 (FGAV…GGAG), 82 to 102 (SVFW…FVFA), 105 to 125 (LATL…SLLI), 157 to 177 (LGAV…SLLA), 215 to 235 (FGMM…MVVI), 253 to 273 (FASI…FPTF), 297 to 317 (LLAP…LVLF), 321 to 341 (WAYA…LTPC), 343 to 363 (TFIP…WALI), 384 to 404 (AMIW…WVVF), 421 to 441 (PMIA…HFGA), and 447 to 467 (VLQL…LILL).

Belongs to the polysaccharide synthase family.

The protein resides in the cell membrane. It participates in glycan metabolism; exopolysaccharide biosynthesis. The polypeptide is Succinoglycan biosynthesis transport protein ExoT (exoT) (Rhizobium meliloti (strain 1021) (Ensifer meliloti)).